The chain runs to 144 residues: Large ribosomal subunit protein uL15 (144 aa).

The tract at residues 24–52 (GSGLGKTAGRGHKGLKSRSGGSVRPGFEG) is disordered.

It belongs to the universal ribosomal protein uL15 family. As to quaternary structure, part of the 50S ribosomal subunit.

Binds to the 23S rRNA. The chain is Large ribosomal subunit protein uL15 from Cellvibrio japonicus (strain Ueda107) (Pseudomonas fluorescens subsp. cellulosa).